The sequence spans 141 residues: Large ribosomal subunit protein uL11 (141 aa).

Belongs to the universal ribosomal protein uL11 family. Part of the ribosomal stalk of the 50S ribosomal subunit. Interacts with L10 and the large rRNA to form the base of the stalk. L10 forms an elongated spine to which L12 dimers bind in a sequential fashion forming a multimeric L10(L12)X complex. In terms of processing, one or more lysine residues are methylated.

Forms part of the ribosomal stalk which helps the ribosome interact with GTP-bound translation factors. This Roseiflexus castenholzii (strain DSM 13941 / HLO8) protein is Large ribosomal subunit protein uL11.